The following is a 431-amino-acid chain: 5-methylthioadenosine/S-adenosylhomocysteine deaminase (431 aa).

Residues H66 and H68 each contribute to the Zn(2+) site. Substrate-binding residues include E95, R147, and H185. H212 provides a ligand contact to Zn(2+). The substrate site is built by E215 and D300. D300 contacts Zn(2+).

Belongs to the metallo-dependent hydrolases superfamily. MTA/SAH deaminase family. Zn(2+) serves as cofactor.

It carries out the reaction S-adenosyl-L-homocysteine + H2O + H(+) = S-inosyl-L-homocysteine + NH4(+). It catalyses the reaction S-methyl-5'-thioadenosine + H2O + H(+) = S-methyl-5'-thioinosine + NH4(+). Functionally, catalyzes the deamination of 5-methylthioadenosine and S-adenosyl-L-homocysteine into 5-methylthioinosine and S-inosyl-L-homocysteine, respectively. Is also able to deaminate adenosine. This Acetivibrio thermocellus (strain ATCC 27405 / DSM 1237 / JCM 9322 / NBRC 103400 / NCIMB 10682 / NRRL B-4536 / VPI 7372) (Clostridium thermocellum) protein is 5-methylthioadenosine/S-adenosylhomocysteine deaminase.